A 131-amino-acid polypeptide reads, in one-letter code: C-glycoside deglycosidase beta subunit (131 aa).

It belongs to the C-glycoside deglycosidase beta subunit family. Heterodimer composed of an alpha subunit (CarB1) and a beta subunit (CarC1). It depends on Mg(2+) as a cofactor.

The enzyme catalyses 3''-dehydroisovitexin = 1,5-anhydro-D-erythro-hex-1-en-3-ulose + apigenin. Its activity is regulated as follows. Activity is strongly reduced in the presence of chelating agents. Carbon-carbon bond-cleaving enzyme which participates in the metabolism of C-glycosides. Acts on the C6-glycosylated compound 3''-dehydroisovitexin (3''-oxo-isovitexin). Shows weak activity with 3''-dehydroisoorientin (3''-oxo-homoorientin) and 3'-dehydromangiferin (3'-oxo-mangiferin). The protein is C-glycoside deglycosidase beta subunit of Arthrobacter globiformis (strain ATCC 8010 / DSM 20124 / JCM 1332 / NBRC 12137 / NCIMB 8907 / NRRL B-2979 / 168).